The primary structure comprises 59 residues: Small, acid-soluble spore protein H (59 aa).

Belongs to the SspH family.

The protein resides in the spore core. This chain is Small, acid-soluble spore protein H, found in Bacillus licheniformis (strain ATCC 14580 / DSM 13 / JCM 2505 / CCUG 7422 / NBRC 12200 / NCIMB 9375 / NCTC 10341 / NRRL NRS-1264 / Gibson 46).